Reading from the N-terminus, the 143-residue chain is Nucleoside diphosphate kinase (143 aa).

6 residues coordinate ATP: K11, F59, R87, T93, R104, and N114. The active-site Pros-phosphohistidine intermediate is H117.

The protein belongs to the NDK family. Homotetramer. Mg(2+) is required as a cofactor.

Its subcellular location is the cytoplasm. It catalyses the reaction a 2'-deoxyribonucleoside 5'-diphosphate + ATP = a 2'-deoxyribonucleoside 5'-triphosphate + ADP. The enzyme catalyses a ribonucleoside 5'-diphosphate + ATP = a ribonucleoside 5'-triphosphate + ADP. Major role in the synthesis of nucleoside triphosphates other than ATP. The ATP gamma phosphate is transferred to the NDP beta phosphate via a ping-pong mechanism, using a phosphorylated active-site intermediate. The protein is Nucleoside diphosphate kinase of Shewanella pealeana (strain ATCC 700345 / ANG-SQ1).